The primary structure comprises 404 residues: Probable homogentisate phytyltransferase 1, chloroplastic (404 aa).

Residues 1–77 constitute a chloroplast transit peptide; it reads MDSLRLRPSL…SHHRIPHRPT (77 aa). The tract at residues 68–96 is disordered; sequence SHHRIPHRPTSSSADASGQPLQSSAEAHD. Positions 76-92 are enriched in polar residues; the sequence is PTSSSADASGQPLQSSA. The next 9 helical transmembrane spans lie at 119–139, 144–164, 184–204, 216–238, 245–265, 282–302, 325–345, 348–368, and 382–402; these read TVIG…ENLS, LFLT…IYIV, LASG…FAAM, PLFL…LPFL, VVAA…AFFL, LIFA…FKDI, VFWI…LMGA, ACLW…AILW, and ITSF…LIPL.

This sequence belongs to the UbiA prenyltransferase family.

The protein resides in the plastid. It is found in the chloroplast thylakoid membrane. It carries out the reaction phytyl diphosphate + homogentisate + H(+) = 2-methyl-6-phytyl-1,4-benzene-1,4-diol + CO2 + diphosphate. Its pathway is cofactor biosynthesis; tocopherol biosynthesis. Its function is as follows. Involved in the synthesis of tocopherol (vitamin E). Catalyzes the condensation of homogentisate and phytyl diphosphate to form dimethylphytylhydroquinone. This chain is Probable homogentisate phytyltransferase 1, chloroplastic (HPT1), found in Oryza sativa subsp. japonica (Rice).